We begin with the raw amino-acid sequence, 200 residues long: Nucleoside triphosphate pyrophosphatase (200 aa).

The active-site Proton acceptor is D79.

Belongs to the Maf family. The cofactor is a divalent metal cation.

The protein localises to the cytoplasm. It carries out the reaction a ribonucleoside 5'-triphosphate + H2O = a ribonucleoside 5'-phosphate + diphosphate + H(+). The enzyme catalyses a 2'-deoxyribonucleoside 5'-triphosphate + H2O = a 2'-deoxyribonucleoside 5'-phosphate + diphosphate + H(+). Functionally, nucleoside triphosphate pyrophosphatase. May have a dual role in cell division arrest and in preventing the incorporation of modified nucleotides into cellular nucleic acids. This Legionella pneumophila (strain Lens) protein is Nucleoside triphosphate pyrophosphatase.